Here is a 418-residue protein sequence, read N- to C-terminus: Tryptophan synthase beta chain (418 aa).

Polar residues predominate over residues 1-12 (MTSTLPTANTPD). Residues 1–21 (MTSTLPTANTPDPASLMPSVR) form a disordered region. Lysine 111 is modified (N6-(pyridoxal phosphate)lysine).

It belongs to the TrpB family. In terms of assembly, tetramer of two alpha and two beta chains. It depends on pyridoxal 5'-phosphate as a cofactor.

It carries out the reaction (1S,2R)-1-C-(indol-3-yl)glycerol 3-phosphate + L-serine = D-glyceraldehyde 3-phosphate + L-tryptophan + H2O. The protein operates within amino-acid biosynthesis; L-tryptophan biosynthesis; L-tryptophan from chorismate: step 5/5. Functionally, the beta subunit is responsible for the synthesis of L-tryptophan from indole and L-serine. The protein is Tryptophan synthase beta chain of Synechococcus sp. (strain CC9311).